The primary structure comprises 107 residues: Quaternary ammonium compound-resistance protein QacH (107 aa).

4 consecutive transmembrane segments (helical) span residues 1–21, 26–46, 57–77, and 84–104; these read MPYL…AFLK, FSKL…FYFL, ITYA…SVLI, and LISI…NTFG.

This sequence belongs to the drug/metabolite transporter (DMT) superfamily. Small multidrug resistance (SMR) (TC 2.A.7.1) family.

It is found in the cell membrane. Its function is as follows. Multidrug exporter. Is implicated for the resistance to bacteriocidal quaternary ammonium compounds. The polypeptide is Quaternary ammonium compound-resistance protein QacH (qacH) (Staphylococcus saprophyticus).